A 133-amino-acid chain; its full sequence is UPF0102 protein bll0669 (133 aa).

It belongs to the UPF0102 family.

In Bradyrhizobium diazoefficiens (strain JCM 10833 / BCRC 13528 / IAM 13628 / NBRC 14792 / USDA 110), this protein is UPF0102 protein bll0669.